The sequence spans 577 residues: Alpha-1,2-mannosyltransferase alg9 (577 aa).

The signal sequence occupies residues 1 to 29 (MPSKAPRKSLSVSFVWTFSILAVLRLTSA). The Extracellular portion of the chain corresponds to 30 to 68 (SFRVIDDCDEVYNYWEPLHYLLYGYGLQTWEYSPEYAIR). The chain crosses the membrane as a helical span at residues 69-89 (SWFYIALHAVPGFLARGLGLS). Over 90–95 (RLHVFY) the chain is Cytoplasmic. Residues 96–116 (FIRGVLACFSAFCETNLILAV) traverse the membrane as a helical segment. The Extracellular segment spans residues 117-136 (ARNFNRAVALHLTSVLFVNS). Residues 137-159 (GMWSASTSFLPSSFAMNMVTLAL) form a helical membrane-spanning segment. Over 160–176 (SAQLSPPSTKRTVKVVS) the chain is Cytoplasmic. A helical transmembrane segment spans residues 177-197 (FITIGAVIGWPFSAALSIPFI). Topologically, residues 198 to 217 (LLELVDLKGRFRHLFCRWFK) are extracellular. A helical transmembrane segment spans residues 218–238 (AIFVALLITGICITVDSLFYH). Over 239-280 (RIQFVAWNIVKYNVLAKDGRGPDIYGTEPWWYYFANLSLQHN) the chain is Cytoplasmic. Residues 281–301 (IVLWFAMACGPLVLLAAFTNW) form a helical membrane-spanning segment. The Extracellular portion of the chain corresponds to 302-305 (INLD). A helical membrane pass occupies residues 306–326 (SFLDLSSVISPFYIWLFIFII). Over 327–333 (QPHKEER) the chain is Cytoplasmic. The helical transmembrane segment at 334–354 (FMYPIYPVLCLAAAIGLDMSL) threads the bilayer. Over 355 to 375 (KLMIQILSSINETVRSKFPVR) the chain is Extracellular. A helical membrane pass occupies residues 376-396 (FVVLCVYAIIGCLSIARILAI). Residues 397-577 (QNYNAPMIIY…NLRRASKQQA (181 aa)) lie on the Cytoplasmic side of the membrane.

This sequence belongs to the glycosyltransferase 22 family.

It is found in the endoplasmic reticulum membrane. It catalyses the reaction an alpha-D-Man-(1-&gt;2)-alpha-D-Man-(1-&gt;2)-alpha-D-Man-(1-&gt;3)-[alpha-D-Man-(1-&gt;3)-alpha-D-Man-(1-&gt;6)]-beta-D-Man-(1-&gt;4)-beta-D-GlcNAc-(1-&gt;4)-alpha-D-GlcNAc-diphospho-di-trans,poly-cis-dolichol + a di-trans,poly-cis-dolichyl beta-D-mannosyl phosphate = an alpha-D-Man-(1-&gt;2)-alpha-D-Man-(1-&gt;2)-alpha-D-Man-(1-&gt;3)-[alpha-D-Man-(1-&gt;2)-alpha-D-Man-(1-&gt;3)-alpha-D-Man-(1-&gt;6)]-beta-D-Man-(1-&gt;4)-beta-D-GlcNAc-(1-&gt;4)-alpha-D-GlcNAc-diphospho-di-trans,poly-cis-dolichol + a di-trans,poly-cis-dolichyl phosphate + H(+). It carries out the reaction an alpha-D-Man-(1-&gt;2)-alpha-D-Man-(1-&gt;2)-alpha-D-Man-(1-&gt;3)-[alpha-D-Man-(1-&gt;2)-alpha-D-Man-(1-&gt;3)-[alpha-D-Man-(1-&gt;6)]-alpha-D-Man-(1-&gt;6)]-beta-D-Man-(1-&gt;4)-beta-D-GlcNAc-(1-&gt;4)-alpha-D-GlcNAc-diphospho-di-trans,poly-cis-dolichol + a di-trans,poly-cis-dolichyl beta-D-mannosyl phosphate = an alpha-D-Man-(1-&gt;2)-alpha-D-Man-(1-&gt;2)-alpha-D-Man-(1-&gt;3)-[alpha-D-Man-(1-&gt;2)-alpha-D-Man-(1-&gt;3)-[alpha-D-Man-(1-&gt;2)-alpha-D-Man-(1-&gt;6)]-alpha-D-Man-(1-&gt;6)]-beta-D-Man-(1-&gt;4)-beta-D-GlcNAc-(1-&gt;4)-alpha-D-GlcNAc-diphospho-di-trans,poly-cis-dolichol + a di-trans,poly-cis-dolichyl phosphate + H(+). Its pathway is protein modification; protein glycosylation. Its function is as follows. Catalyzes the transfer of mannose from Dol-P-Man to lipid-linked oligosaccharides. The chain is Alpha-1,2-mannosyltransferase alg9 (alg9) from Schizosaccharomyces pombe (strain 972 / ATCC 24843) (Fission yeast).